A 117-amino-acid polypeptide reads, in one-letter code: Large ribosomal subunit protein uL18 (117 aa).

The protein belongs to the universal ribosomal protein uL18 family. In terms of assembly, part of the 50S ribosomal subunit; part of the 5S rRNA/L5/L18/L25 subcomplex. Contacts the 5S and 23S rRNAs.

This is one of the proteins that bind and probably mediate the attachment of the 5S RNA into the large ribosomal subunit, where it forms part of the central protuberance. The chain is Large ribosomal subunit protein uL18 from Cronobacter sakazakii (strain ATCC BAA-894) (Enterobacter sakazakii).